Consider the following 404-residue polypeptide: S-adenosylmethionine synthase (404 aa).

H17 is an ATP binding site. Mg(2+) is bound at residue D19. E45 provides a ligand contact to K(+). Residues E58 and Q101 each contribute to the L-methionine site. Residues 101 to 111 form a flexible loop region; sequence QSPDINRGVDR. Residues 172 to 174, 245 to 246, D254, 260 to 261, A277, and K281 each bind ATP; these read DAK, RF, and RK. D254 contacts L-methionine. K285 contacts L-methionine.

It belongs to the AdoMet synthase family. As to quaternary structure, homotetramer; dimer of dimers. The cofactor is Mg(2+). Requires K(+) as cofactor.

Its subcellular location is the cytoplasm. It catalyses the reaction L-methionine + ATP + H2O = S-adenosyl-L-methionine + phosphate + diphosphate. It participates in amino-acid biosynthesis; S-adenosyl-L-methionine biosynthesis; S-adenosyl-L-methionine from L-methionine: step 1/1. Its function is as follows. Catalyzes the formation of S-adenosylmethionine (AdoMet) from methionine and ATP. The overall synthetic reaction is composed of two sequential steps, AdoMet formation and the subsequent tripolyphosphate hydrolysis which occurs prior to release of AdoMet from the enzyme. The polypeptide is S-adenosylmethionine synthase (Pelodictyon phaeoclathratiforme (strain DSM 5477 / BU-1)).